Consider the following 235-residue polypeptide: Proteasome subunit alpha (235 aa).

The protein belongs to the peptidase T1A family. The 20S proteasome core is composed of 14 alpha and 14 beta subunits that assemble into four stacked heptameric rings, resulting in a barrel-shaped structure. The two inner rings, each composed of seven catalytic beta subunits, are sandwiched by two outer rings, each composed of seven alpha subunits. The catalytic chamber with the active sites is on the inside of the barrel. Has a gated structure, the ends of the cylinder being occluded by the N-termini of the alpha-subunits. Is capped by the proteasome-associated ATPase, ARC.

Its subcellular location is the cytoplasm. The protein operates within protein degradation; proteasomal Pup-dependent pathway. Its activity is regulated as follows. The formation of the proteasomal ATPase ARC-20S proteasome complex, likely via the docking of the C-termini of ARC into the intersubunit pockets in the alpha-rings, may trigger opening of the gate for substrate entry. Interconversion between the open-gate and close-gate conformations leads to a dynamic regulation of the 20S proteasome proteolysis activity. Component of the proteasome core, a large protease complex with broad specificity involved in protein degradation. This chain is Proteasome subunit alpha, found in Paenarthrobacter aurescens (strain TC1).